Here is a 493-residue protein sequence, read N- to C-terminus: Activin receptor type-1C (493 aa).

Positions 1–20 are cleaved as a signal peptide; it reads MTRALCSALRQALLLLAAAA. Over 22–113 the chain is Extracellular; it reads LSPGLKCVCL…PNAPKLGPME (92 aa). A helical membrane pass occupies residues 114 to 134; sequence LAIIITVPVCLLSIAAMLTVW. At 135–493 the chain is on the cytoplasmic side; it reads ACQGRQCSYR…QLCVKEDCKA (359 aa). Residues 165-194 form the GS domain; it reads KTLKDLIYDVTASGSGSGLPLLVQRTIART. The Protein kinase domain occupies 195–485; the sequence is IVLQEIVGKG…LRIKKTISQL (291 aa). Residues 201–209 and lysine 222 contribute to the ATP site; that span reads VGKGRFGEV. Aspartate 323 acts as the Proton acceptor in catalysis.

This sequence belongs to the protein kinase superfamily. TKL Ser/Thr protein kinase family. TGFB receptor subfamily. In terms of assembly, binds the type 2 receptor protein ACVR2A. Requires Mg(2+) as cofactor. The cofactor is Mn(2+). Present in pancreas, heart, colon, small intestine, ovary and the hippocampus, medulla oblongata and putamen of the brain. Isoform 1, isoform 2, isoform 3 and isoform 4 are all expressed in the placenta throughout pregnancy.

The protein resides in the membrane. It catalyses the reaction L-threonyl-[receptor-protein] + ATP = O-phospho-L-threonyl-[receptor-protein] + ADP + H(+). The catalysed reaction is L-seryl-[receptor-protein] + ATP = O-phospho-L-seryl-[receptor-protein] + ADP + H(+). Its function is as follows. Serine/threonine protein kinase which forms a receptor complex on ligand binding. The receptor complex consists of 2 type II and 2 type I transmembrane serine/threonine kinases. Type II receptors phosphorylate and activate type I receptors which autophosphorylate, then bind and activate SMAD transcriptional regulators, SMAD2 and SMAD3. Receptor for activin AB, activin B, activin E and NODAL. Upon NODAL binding, activation results in increased apoptosis and reduced proliferation through suppression of AKT signaling and the activation of Smad2-dependent signaling pathway in pancreatic beta-cells, trophoblasts, epithelial or neuronal cells. Acts as a positive regulator for macrophage activation partially through down-regulation of PPARG expression. The sequence is that of Activin receptor type-1C from Homo sapiens (Human).